A 374-amino-acid polypeptide reads, in one-letter code: Chaperone protein DnaJ (374 aa).

A J domain is found at 5-70; that stretch reads DYYEVLGVAR…NKRRMYDSHG (66 aa). A CR-type zinc finger spans residues 130–207; sequence GVERRIEIPT…CHGNGRVEED (78 aa). Zn(2+)-binding residues include Cys143, Cys146, Cys159, Cys162, Cys181, Cys184, Cys195, and Cys198. 4 CXXCXGXG motif repeats span residues 143–150, 159–166, 181–188, and 195–202; these read CGDCDGSG, CNVCHGRG, CHNCGGRG, and CKTCHGNG.

Belongs to the DnaJ family. As to quaternary structure, homodimer. Zn(2+) is required as a cofactor.

Its subcellular location is the cytoplasm. Its function is as follows. Participates actively in the response to hyperosmotic and heat shock by preventing the aggregation of stress-denatured proteins and by disaggregating proteins, also in an autonomous, DnaK-independent fashion. Unfolded proteins bind initially to DnaJ; upon interaction with the DnaJ-bound protein, DnaK hydrolyzes its bound ATP, resulting in the formation of a stable complex. GrpE releases ADP from DnaK; ATP binding to DnaK triggers the release of the substrate protein, thus completing the reaction cycle. Several rounds of ATP-dependent interactions between DnaJ, DnaK and GrpE are required for fully efficient folding. Also involved, together with DnaK and GrpE, in the DNA replication of plasmids through activation of initiation proteins. The sequence is that of Chaperone protein DnaJ from Stenotrophomonas maltophilia (strain K279a).